Reading from the N-terminus, the 428-residue chain is Adenylosuccinate synthetase (428 aa).

Residues 12 to 18 (GDEGKGK) and 40 to 42 (GHT) each bind GTP. The Proton acceptor role is filled by aspartate 13. Residues aspartate 13 and glycine 40 each contribute to the Mg(2+) site. Residues 13 to 16 (DEGK), 38 to 41 (NAGH), threonine 131, arginine 145, glutamine 226, threonine 241, and arginine 305 contribute to the IMP site. Histidine 41 functions as the Proton donor in the catalytic mechanism. A substrate-binding site is contributed by 301 to 307 (ATTGRKR). GTP contacts are provided by residues arginine 307, 333–335 (KLD), and 415–417 (SVG).

This sequence belongs to the adenylosuccinate synthetase family. As to quaternary structure, homodimer. The cofactor is Mg(2+).

It is found in the cytoplasm. It carries out the reaction IMP + L-aspartate + GTP = N(6)-(1,2-dicarboxyethyl)-AMP + GDP + phosphate + 2 H(+). It participates in purine metabolism; AMP biosynthesis via de novo pathway; AMP from IMP: step 1/2. Its function is as follows. Plays an important role in the de novo pathway of purine nucleotide biosynthesis. Catalyzes the first committed step in the biosynthesis of AMP from IMP. In Nitratidesulfovibrio vulgaris (strain DSM 19637 / Miyazaki F) (Desulfovibrio vulgaris), this protein is Adenylosuccinate synthetase.